We begin with the raw amino-acid sequence, 148 residues long: uncharacterized protein (148 aa).

Residues 1–144 (MNIKRITTEA…PHVLMTKEIS (144 aa)) form the N-acetyltransferase domain.

This is an uncharacterized protein from Bacillus subtilis (strain 168).